A 273-amino-acid chain; its full sequence is 2,3,4,5-tetrahydropyridine-2,6-dicarboxylate N-succinyltransferase (273 aa).

Positions 104 and 141 each coordinate substrate.

Belongs to the transferase hexapeptide repeat family. As to quaternary structure, homotrimer.

The protein localises to the cytoplasm. It carries out the reaction (S)-2,3,4,5-tetrahydrodipicolinate + succinyl-CoA + H2O = (S)-2-succinylamino-6-oxoheptanedioate + CoA. It participates in amino-acid biosynthesis; L-lysine biosynthesis via DAP pathway; LL-2,6-diaminopimelate from (S)-tetrahydrodipicolinate (succinylase route): step 1/3. This Azoarcus sp. (strain BH72) protein is 2,3,4,5-tetrahydropyridine-2,6-dicarboxylate N-succinyltransferase.